The primary structure comprises 294 residues: MSVKQLGYLIFECRADVLEQMVVVYQDIIGAVVERDEGGRALVRLDGRPFRIRLDPGPANRLAAIGWNVDPSDLAAIAEQVEKACYSVVTADAELAADRAAAQVRQFADNDGFTHELYVESSFPTDPVLESLFVCGEEANGIFGLGHLVVIVADRAKTQSFFTDVLGFGLSDRVTWPEADIFFLHCNQRHHTVALSAPALGLKPGMVHHLMLEAKSKEQVDRAFAAVKRLGYDVLMTIGQHSNDKVYSFYMMAPAGFAVELGFGGQVIGDLESWHVGFYDAPSIWGHELQLPAH.

2 consecutive VOC domains span residues glycine 7–glutamate 120 and glycine 144–glycine 264. Residues histidine 147, histidine 209, and glutamate 260 each coordinate Fe cation.

The protein belongs to the extradiol ring-cleavage dioxygenase family. In terms of assembly, monomer. Fe(2+) serves as cofactor.

It functions in the pathway xenobiotic degradation; dibenzo-p-dioxin degradation; 2-hydroxymuconate and catechol from dibenzo-p-dioxin: step 2/3. Its pathway is xenobiotic degradation; dibenzofuran degradation; 2-hydroxy-2,4-pentadienoate and salicylate from dibenzofuran: step 2/3. In terms of biological role, responsible for meta-cleavage of the first aromatic ring of 2,2',3-trihydroxybiphenyl and 2,3-dihydroxybiphenyl. 2,2',3-trihydroxydiphenyl ether, catechol, 3-methylcatechol, and 4-methylcatechol are oxidized less efficiently and 3,4-dihydroxybiphenyl is oxidized considerably less efficiently. The sequence is that of 2,2',3-trihydroxybiphenyl dioxygenase (dbfB) from Sphingomonas paucimobilis (Pseudomonas paucimobilis).